The primary structure comprises 1032 residues: Exportin-T (1032 aa).

It belongs to the exportin family.

It localises to the nucleus. The protein resides in the cytoplasm. In terms of biological role, tRNA nucleus export receptor which facilitates tRNA translocation across the nuclear pore complex. Involved in pre-tRNA splicing, probably by affecting the interaction of pre-tRNA with splicing endonuclease. The chain is Exportin-T (los1) from Aspergillus fumigatus (strain ATCC MYA-4609 / CBS 101355 / FGSC A1100 / Af293) (Neosartorya fumigata).